Here is a 299-residue protein sequence, read N- to C-terminus: MKKVKAAIIGSGNIGTDLMYKLKNSKVIELNAMIGIDSESDGLKRAKEAGYEVFDNGIQAIIDNPSLADIVFDATSAKAHSYHAKILEELGKIVIDLTPAAYGPFVCPAIRNNDFLDKQNVNMITCGGQATIPIVHAINEVANVTYAEIVATISSLSAGPGTRANIDEFTITTKRGIEEIGGADKGKAIIILNPAEPPILMRDTIYCEVKDMDEVSIYEAIHKMVERVRTYVPGYSLKQEPMFDGNRVTVFLEVEGAGDYFPPYAGNLDIMTAAALKVGEEFATQIVSEKKRGVMNEAK.

An NAD(+)-binding site is contributed by 11 to 14 (SGNI). The Acyl-thioester intermediate role is filled by Cys-126. NAD(+) contacts are provided by residues 157–165 (SAGPGTRAN) and Asn-267.

The protein belongs to the acetaldehyde dehydrogenase family.

The enzyme catalyses acetaldehyde + NAD(+) + CoA = acetyl-CoA + NADH + H(+). The polypeptide is Acetaldehyde dehydrogenase (Bacillus cereus (strain ATCC 10987 / NRS 248)).